Consider the following 108-residue polypeptide: Nucleoid-associated protein BP1550 (108 aa).

The interval 87–108 (SQEKMASVTAGMPLPPGMKLPF) is disordered. Over residues 99–108 (PLPPGMKLPF) the composition is skewed to pro residues.

It belongs to the YbaB/EbfC family. In terms of assembly, homodimer.

The protein resides in the cytoplasm. The protein localises to the nucleoid. In terms of biological role, binds to DNA and alters its conformation. May be involved in regulation of gene expression, nucleoid organization and DNA protection. This chain is Nucleoid-associated protein BP1550, found in Bordetella pertussis (strain Tohama I / ATCC BAA-589 / NCTC 13251).